We begin with the raw amino-acid sequence, 34 residues long: Beta/mu-theraphotoxin-Pe1b (34 aa).

Intrachain disulfides connect C2–C16, C9–C21, and C15–C28.

It belongs to the neurotoxin 10 (Hwtx-1) family. 54 (ProTx-1) subfamily. In terms of tissue distribution, expressed by the venom gland.

Its subcellular location is the secreted. Its function is as follows. Ion channel impairing toxin that inhibits several voltage-gated sodium channels. It acts by inhibiting the inward component of the sodium current and by shifting the voltage dependence of channel activation to more depolarized potentials. Its most potent activity is on Nav1.7/SCN9A (IC(50)=167 nM), followed by Nav1.6/SCN8A (IC(50)=696 nM), and Nav1.2/SCN2A (IC(50)=3.54 uM). This Phormingochilus everetti (Malaysian purple earth tiger tarantula) protein is Beta/mu-theraphotoxin-Pe1b.